The primary structure comprises 285 residues: Pantothenate synthetase (285 aa).

Met-30–His-37 lines the ATP pocket. The active-site Proton donor is the His-37. Residue Gln-61 coordinates (R)-pantoate. Gln-61 is a beta-alanine binding site. Gly-147–Asp-150 is an ATP binding site. Gln-153 lines the (R)-pantoate pocket. ATP-binding positions include Val-176 and Lys-184–Arg-187.

The protein belongs to the pantothenate synthetase family. Homodimer.

The protein resides in the cytoplasm. It carries out the reaction (R)-pantoate + beta-alanine + ATP = (R)-pantothenate + AMP + diphosphate + H(+). It functions in the pathway cofactor biosynthesis; (R)-pantothenate biosynthesis; (R)-pantothenate from (R)-pantoate and beta-alanine: step 1/1. Catalyzes the condensation of pantoate with beta-alanine in an ATP-dependent reaction via a pantoyl-adenylate intermediate. This chain is Pantothenate synthetase, found in Listeria monocytogenes serovar 1/2a (strain ATCC BAA-679 / EGD-e).